The primary structure comprises 847 residues: MAAAAPAAAASPEAPAVSGSADPETGDEDSREVRVLQSLRGRIYEAKNLLPYLGPNKMRDCFCTINLDQEEVYRTQVVEKSLSPYFSEEFYFEIPRTFQYLSFYVYDKNVLQRDLRIGKVAIKKEDLCSHSGKETWFSLQPIDSNSEVQGKVHLELRLNELITENGTVCQQLVVHIKACHGLPLINGQSCDPYATVSLVGPSRNDQKKTKVKKKTSNPQFNEVFYFEVTRSSSYSRKSQFQVEEEDIEKLEIRIDLWNNENLVQDVFLGEIKVPVNVLRSDSFHQAWYLLQPRDNGNKSSKTDDLGSLLLTLCYTEDCVLPSEYYGPLKTLLLKSPDVQPVSASAAYILGEICQDQKDAVLPLVRLLLHHNKLVPFITAVAELDLKDTPDANAIFRGNSLATQCLTEMMKIVGGHYLKVTLKPVLDEICESSKSCEIDPVKLKEGDNVENNKENLYYYVDKVFNTIVGSSVSCPTVMCDIFYSLRQMAAKKFPNHPHVQYSAVSSFVFLRFFAVAILSPHAFHLRPHYPDTQTVRTLTLISKTIQIIGNWGCQSRKKSRFKKSVMCEFLKMFQEERYFTDVKKFLDEISSTETKESSGTSEPVHLKEGEMYKRAQGRTRIGKKNFKKRWFCLTSRELTYHRQQGKDAIYTIPVKNILAVEKLEEGSFNKKNMFQVIHTEKTLYIQANNCVEANEWIDVLCRVSRCNHNRLSSFHPSAYLNGNWLCCQETSESTPGCKPCTAGIPADIQIDIDEDRETERIYSIFTLSLLKLQKMEETCGSIAVYQGPQKEPGYSKFTIEDSVATFKTIQQIKSTIEKLDEPHEKYRKKRSSSAKYGSKENPIVGKIS.

The segment covering 1 to 21 (MAAAAPAAAASPEAPAVSGSA) has biased composition (low complexity). Residues 1-31 (MAAAAPAAAASPEAPAVSGSADPETGDEDSR) are disordered. An N-acetylalanine modification is found at A2. C2 domains lie at 19-137 (GSAD…ETWF) and 148-288 (VQGK…QAWY). The 218-residue stretch at 371–588 (NKLVPFITAV…TDVKKFLDEI (218 aa)) folds into the Ras-GAP domain. S554 is subject to Phosphoserine. A PH domain is found at 603–704 (VHLKEGEMYK…WIDVLCRVSR (102 aa)). The Btk-type zinc-finger motif lies at 706–742 (NHNRLSSFHPSAYLNGNWLCCQETSESTPGCKPCTAG). H714, C725, C726, and C736 together coordinate Zn(2+). The tract at residues 819–847 (DEPHEKYRKKRSSSAKYGSKENPIVGKIS) is disordered.

The protein localises to the cell membrane. Its function is as follows. Inhibitory regulator of the Ras-cyclic AMP pathway. Binds inositol tetrakisphosphate (IP4) and phospholipids. The sequence is that of Ras GTPase-activating protein 2 (Rasa2) from Mus musculus (Mouse).